Consider the following 373-residue polypeptide: Flagellar P-ring protein (373 aa).

The N-terminal stretch at 1-28 (MPRVSTHLVKLAAAALCALLLSAVAASA) is a signal peptide.

Belongs to the FlgI family. The basal body constitutes a major portion of the flagellar organelle and consists of four rings (L,P,S, and M) mounted on a central rod.

The protein resides in the periplasm. Its subcellular location is the bacterial flagellum basal body. Assembles around the rod to form the L-ring and probably protects the motor/basal body from shearing forces during rotation. The sequence is that of Flagellar P-ring protein from Rhodopseudomonas palustris (strain ATCC BAA-98 / CGA009).